The primary structure comprises 260 residues: Hydroxyethylthiazole kinase (260 aa).

M38 lines the substrate pocket. 2 residues coordinate ATP: R114 and T159. G186 is a binding site for substrate.

This sequence belongs to the Thz kinase family. The cofactor is Mg(2+).

The catalysed reaction is 5-(2-hydroxyethyl)-4-methylthiazole + ATP = 4-methyl-5-(2-phosphooxyethyl)-thiazole + ADP + H(+). The protein operates within cofactor biosynthesis; thiamine diphosphate biosynthesis; 4-methyl-5-(2-phosphoethyl)-thiazole from 5-(2-hydroxyethyl)-4-methylthiazole: step 1/1. Functionally, catalyzes the phosphorylation of the hydroxyl group of 4-methyl-5-beta-hydroxyethylthiazole (THZ). This is Hydroxyethylthiazole kinase from Helicobacter pylori (strain HPAG1).